The following is a 90-amino-acid chain: Small ribosomal subunit protein bS16 (90 aa).

Belongs to the bacterial ribosomal protein bS16 family.

The sequence is that of Small ribosomal subunit protein bS16 from Lactobacillus delbrueckii subsp. bulgaricus (strain ATCC 11842 / DSM 20081 / BCRC 10696 / JCM 1002 / NBRC 13953 / NCIMB 11778 / NCTC 12712 / WDCM 00102 / Lb 14).